Here is a 131-residue protein sequence, read N- to C-terminus: MLEEFKKFALKGNVLDLAVGVIIGGAFGKIVTSLVNDIIMPILGLVVGGINFTALEYVLTEKGSEPIVLRYGQFIQTTFDFLIIAFSIFMFIKVLTKFKKKEEEKPASAPKPSKEEMLLSEIRDILKEKAN.

Helical transmembrane passes span 8 to 28, 30 to 50, and 72 to 92; these read FALKGNVLDLAVGVIIGGAFG, IVTSLVNDIIMPILGLVVGGI, and GQFIQTTFDFLIIAFSIFMFI.

This sequence belongs to the MscL family. As to quaternary structure, homopentamer.

Its subcellular location is the cell membrane. Channel that opens in response to stretch forces in the membrane lipid bilayer. May participate in the regulation of osmotic pressure changes within the cell. This chain is Large-conductance mechanosensitive channel, found in Alkaliphilus oremlandii (strain OhILAs) (Clostridium oremlandii (strain OhILAs)).